The sequence spans 291 residues: Pantothenate synthetase (291 aa).

30–37 (MGNLHEGH) contacts ATP. The Proton donor role is filled by H37. (R)-pantoate is bound at residue Q61. Q61 serves as a coordination point for beta-alanine. 149–152 (GEKD) is an ATP binding site. Q155 is a (R)-pantoate binding site. ATP-binding positions include V178 and 186 to 189 (MSSR).

The protein belongs to the pantothenate synthetase family. As to quaternary structure, homodimer.

It is found in the cytoplasm. It carries out the reaction (R)-pantoate + beta-alanine + ATP = (R)-pantothenate + AMP + diphosphate + H(+). Its pathway is cofactor biosynthesis; (R)-pantothenate biosynthesis; (R)-pantothenate from (R)-pantoate and beta-alanine: step 1/1. Its function is as follows. Catalyzes the condensation of pantoate with beta-alanine in an ATP-dependent reaction via a pantoyl-adenylate intermediate. The polypeptide is Pantothenate synthetase (Aliivibrio fischeri (strain ATCC 700601 / ES114) (Vibrio fischeri)).